The following is a 278-amino-acid chain: Undecaprenyl-diphosphatase (278 aa).

8 consecutive transmembrane segments (helical) span residues 3-23 (YILI…IPIS), 42-62 (VAYS…IIYF), 88-108 (FLVI…LFVI), 112-132 (ILGL…IIIY), 152-172 (IIIV…RSGI), 190-210 (LSFI…VLFS), 225-245 (GLLI…NALL), and 253-273 (VVVL…LSGI).

The protein belongs to the UppP family.

It localises to the cell membrane. It catalyses the reaction di-trans,octa-cis-undecaprenyl diphosphate + H2O = di-trans,octa-cis-undecaprenyl phosphate + phosphate + H(+). Its function is as follows. Catalyzes the dephosphorylation of undecaprenyl diphosphate (UPP). The polypeptide is Undecaprenyl-diphosphatase (Saccharolobus islandicus (strain M.14.25 / Kamchatka #1) (Sulfolobus islandicus)).